The chain runs to 1486 residues: MIERGKFRSLTLINWNGFFARTFDLDELVTTLSGGNGAGKSTTMAAFVTALIPDLTLLHFRNTTEAGATSGSRDKGLHGKLKAGVCYSMLDTINSRHQRVVVGVRLQQVAGRDRKVDIKPFAIQGLPMSVQPTQLVTETLNERQARVLPLNELKDKLEAMEGVQFKQFNSITDYHSLMFDLGIIARRLRSASDRSKFYRLIEASLYGGISSAITRSLRDYLLPENSGVRKAFQDMEAALRENRMTLEAIRVTQSDRDLFKHLISEATNYVAADYMRHANERRVHLDKALEFRRELHTSRKQLAAEQYKHVDMARELAEHNGAEGDLEADYQAASDHLNLVQTALRQQEKIERYEADLDELQIRLEEQNEVVAEAIERQEENEARAEAAELEVDELKSQLADYQQALDVQQTRAIQYNQAIAALNRAKELCHLPDLTADSAAEWLETFQAKELEATEKMLSLEQKMSMAQTAHSQFEQAYQLVVAINGPLARNEAWDVARELLREGVDQRHLAEQVQPLRMRLSELEQRLREQQEAERLLADFCKRQGKNFDIDELEALHQELEARIASLSDSVSNAREERMALRQEQEQLQSRIQSLMQRAPVWLAAQNSLNQLSEQCGEEFTSSQDVTEFLQQLLEREREAIVERDEVGARKNAVDEEIERLSQPGGSEDQRLNALAERFGGVLLSEIYDDVSLEDAPYFSALYGPSRHAIVVPDLSQVTEHLEGLTDCPEDLYLIEGDPQSFDDSVFSVDELEKAVVVKIADRQWRYSRFPEVPLFGRAARESRIESLHAEREVLSERFATLSFDVQKTQRLHQAFSRFIGSHLAVAFESDPEAEIRQLNSRRVELERALSNHENDNQQQRIQFEQAKEGVTALNRILPRLNLLADDSLADRVDEIRERLDEAQEAARFVQQFGNQLAKLEPIVSVLQSDPEQFEQLKEDYAYSQQMQRDARQQAFALTEVVQRRAHFSYSDSAEMLSGNSDLNEKLRERLEQAEAERTRAREALRGHAAQLNQYNQVLASLKSSYDTKKELLNDLQRELQDIGVRADSGAEERARIRRDELHAQLSNNRSRRNQLEKALTFCEAEMDNLTRKLRKLERDYFEMREQVVTAKAGWCAVMRMVKDNGVERRLHRRELAYLSADDLRSMSDKALGALRLAVADNEHLRDVLRMSEDPKRPERKIQFFVAVYQHLRERIRQDIIRTDDPVEAIEQMEIELSRLTEELTSREQKLAISSRSVANIIRKTIQREQNRIRMLNQGLQNVSFGQVNSVRLNVNVRETHAMLLDVLSEQHEQHQDLFNSNRLTFSEALAKLYQRLNPQIDMGQRTPQTIGEELLDYRNYLEMEVEVNRGSDGWLRAESGALSTGEAIGTGMSILVMVVQSWEDESRRLRGKDISPCRLLFLDEAARLDARSIATLFELCERLQMQLIIAAPENISPEKGTTYKLVRKVFQNTEHVHVVGLRGFAPQLPETLPGSDEAPSQAS.

Residue 34–41 (GGNGAGKS) participates in ATP binding. 3 coiled-coil regions span residues 326-418 (LEAD…QYNQ), 444-480 (LETF…QAYQ), and 509-603 (RHLA…RAPV). A flexible hinge region spans residues 666 to 783 (PGGSEDQRLN…EVPLFGRAAR (118 aa)). Coiled-coil stretches lie at residues 835–923 (EAEI…AKLE), 977–1115 (EMLS…TAKA), and 1209–1266 (VEAI…QNVS).

Belongs to the SMC family. MukB subfamily. Homodimerization via its hinge domain. Binds to DNA via its C-terminal region. Interacts, and probably forms a ternary complex, with MukE and MukF via its C-terminal region. The complex formation is stimulated by calcium or magnesium. Interacts with tubulin-related protein FtsZ.

Its subcellular location is the cytoplasm. It localises to the nucleoid. In terms of biological role, plays a central role in chromosome condensation, segregation and cell cycle progression. Functions as a homodimer, which is essential for chromosome partition. Involved in negative DNA supercoiling in vivo, and by this means organize and compact chromosomes. May achieve or facilitate chromosome segregation by condensation DNA from both sides of a centrally located replisome during cell division. The polypeptide is Chromosome partition protein MukB (Escherichia coli O6:K15:H31 (strain 536 / UPEC)).